The primary structure comprises 284 residues: P2R1A-PPP2R2A-interacting phosphatase regulator 1 (284 aa).

The interval 1–65 (MAQEKMELDL…RRNSTTFPSR (65 aa)) is disordered. Over residues 20 to 29 (EGGGPGGGGL) the composition is skewed to gly residues. The residue at position 32 (Ser32) is a Phosphoserine. A Phosphoserine; by CHEK1 modification is found at Ser34. 4 positions are modified to phosphoserine: Ser42, Ser45, Ser59, and Ser73. Lys86 is covalently cross-linked (Glycyl lysine isopeptide (Lys-Gly) (interchain with G-Cter in SUMO1)). Ser140 and Ser144 each carry phosphoserine. At Thr146 the chain carries Phosphothreonine. The disordered stretch occupies residues 164 to 185 (SNGLPPSPIPSPTTRFTTRRSQ). Over residues 175 to 185 (PTTRFTTRRSQ) the composition is skewed to low complexity. 2 positions are modified to phosphoserine: Ser184 and Ser186. Residues 233 to 284 (GVCVSSDTLDGNSSSAGSSCNSPAKVSTTTDSPVSPAQAASPFIPVDELSSK) form a disordered region. Positions 243 to 254 (GNSSSAGSSCNS) are enriched in low complexity. Residues 256 to 267 (AKVSTTTDSPVS) show a composition bias toward polar residues. Residues Ser264, Ser267, and Ser273 each carry the phosphoserine modification.

Belongs to the FAM122 family. As to quaternary structure, interacts with PPP2CA and PPP2R1A. Interacts (via its N-terminus) with PPP2R2A; the interaction is direct and this interaction inhibits PP2A activity. The CHEK1-mediated Ser-34 phosphorylated form interacts with 14-3-3 proteins. Post-translationally, CHEK1-mediated phosphorylation at Ser-34 negatively regulates its ability to inhibit serine/threonine-protein phosphatase 2A (PP2A) activity. Phosphorylation leads to its release from the PP2A complex and its sequestration by 14-3-3 proteins in the cytoplasm resulting in its inability to translocate to the nucleus, where it otherwise inhibits PP2A.

The protein localises to the nucleus. It is found in the cytoplasm. Functionally, acts as an inhibitor of serine/threonine-protein phosphatase 2A (PP2A) activity. Inhibits PP2A activity by blocking the substrate binding site on PPP2R2A and the active site of PPP2CA. Potentiates ubiquitin-mediated proteasomal degradation of serine/threonine-protein phosphatase 2A catalytic subunit alpha (PPP2CA). Inhibits PP2A-mediated dephosphorylation of WEE1, promoting ubiquitin-mediated proteolysis of WEE1, thereby releasing G2/M checkpoint. This chain is P2R1A-PPP2R2A-interacting phosphatase regulator 1, found in Mus musculus (Mouse).